The chain runs to 142 residues: Large ribosomal subunit protein uL11 (142 aa).

The protein belongs to the universal ribosomal protein uL11 family. Part of the ribosomal stalk of the 50S ribosomal subunit. Interacts with L10 and the large rRNA to form the base of the stalk. L10 forms an elongated spine to which L12 dimers bind in a sequential fashion forming a multimeric L10(L12)X complex. One or more lysine residues are methylated.

Forms part of the ribosomal stalk which helps the ribosome interact with GTP-bound translation factors. The sequence is that of Large ribosomal subunit protein uL11 from Pseudoalteromonas translucida (strain TAC 125).